The sequence spans 585 residues: Glutathione S-transferase C-terminal domain-containing protein homolog (585 aa).

Residues 120–275 (LGFKGSCLLA…DKCARVLRDL (156 aa)) form the GST C-terminal domain.

Belongs to the GSTCD family.

The polypeptide is Glutathione S-transferase C-terminal domain-containing protein homolog (Drosophila melanogaster (Fruit fly)).